Here is a 1047-residue protein sequence, read N- to C-terminus: Jouberin (1047 aa).

3 stretches are compositionally biased toward basic and acidic residues: residues 1–17, 29–40, and 77–86; these read MEPE…EKVR, SREKTGIEEKGE, and LLHDDKLASE. Disordered stretches follow at residues 1–40 and 67–181; these read MEPE…EKGE and EQLT…SRDS. Positions 1 to 284 are interaction with HAP1; it reads MEPETPEKVD…IFNENFPYLL (284 aa). Residues 96-106 show a composition bias toward low complexity; sequence PVPTKPESSPS. Over residues 115 to 138 the composition is skewed to basic and acidic residues; it reads GEQKKEGTPEDSQHMEGICSREQD. Residues 149 to 159 are compositionally biased toward basic residues; the sequence is PKPKKTKKKTK. Residues 172 to 181 show a composition bias toward basic and acidic residues; it reads GVHEITSRDS. 7 WD repeats span residues 457-499, 502-541, 545-585, 592-631, 648-687, 691-730, and 735-776; these read AGER…FMRE, GHLN…TSTF, PHPS…DAAI, VHKS…NDVQ, FRGV…ARKF, ANYR…QVAM, and PFKS…AQQE. At S853 the chain carries Phosphoserine. Residues 902 to 962 enclose the SH3 domain; that stretch reads DPPPMVVALY…PANHVASETL (61 aa). Composition is skewed to basic and acidic residues over residues 963–987 and 1013–1040; these read YRDS…KPEK and HSEK…EPVV. The interval 963 to 1047 is disordered; the sequence is YRDSPPKVKE…PVVRKVTLIE (85 aa). Position 974 is a phosphoserine (S974).

In terms of assembly, self-associates. Part of the tectonic-like complex (also named B9 complex). Interacts with MKS1. Interacts with NPHP1; probably as heterodimers and/or AHI1(2):NPHP1(2) heterotetramers. Interacts (via SH3 domain) with the dynamin GTPase DNM2. Interacts with HAP1; probably as AHI1(2):HAP1(2) heterotetramers. Interacts with RAB8A. Interacts with CEND1. Interacts with SPATA7. Expressed in the retina (at protein level). Highly expressed in the brain. Highly expressed in the testis. Expressed in the kidney, thymus, heart, lung, spleen. Weakly expressed in the liver, stomach, pancreas, and embryo. Strongly expressed during periods of both cortical and cerebellar development.

The protein resides in the cytoplasm. Its subcellular location is the cytoskeleton. The protein localises to the cilium basal body. It localises to the microtubule organizing center. It is found in the centrosome. The protein resides in the centriole. Its subcellular location is the cell junction. The protein localises to the adherens junction. Functionally, involved in vesicle trafficking and required for ciliogenesis, formation of primary non-motile cilium, and recruitment of RAB8A to the basal body of primary cilium. Component of the tectonic-like complex, a complex localized at the transition zone of primary cilia and acting as a barrier that prevents diffusion of transmembrane proteins between the cilia and plasma membranes. Involved in neuronal differentiation. As a positive modulator of classical Wnt signaling, may play a crucial role in ciliary signaling during cerebellum embryonic development. This chain is Jouberin (Ahi1), found in Mus musculus (Mouse).